The following is a 237-amino-acid chain: Phosphoadenosine 5'-phosphosulfate reductase (237 aa).

C231 functions as the Nucleophile; cysteine thiosulfonate intermediate in the catalytic mechanism.

It belongs to the PAPS reductase family. CysH subfamily.

The protein localises to the cytoplasm. It catalyses the reaction [thioredoxin]-disulfide + sulfite + adenosine 3',5'-bisphosphate + 2 H(+) = [thioredoxin]-dithiol + 3'-phosphoadenylyl sulfate. It participates in sulfur metabolism; hydrogen sulfide biosynthesis; sulfite from sulfate: step 3/3. Its function is as follows. Catalyzes the formation of sulfite from phosphoadenosine 5'-phosphosulfate (PAPS) using thioredoxin as an electron donor. This is Phosphoadenosine 5'-phosphosulfate reductase from Xylella fastidiosa (strain 9a5c).